The sequence spans 351 residues: uncharacterized protein (351 aa).

This is an uncharacterized protein from Caenorhabditis elegans.